Consider the following 142-residue polypeptide: ATP synthase epsilon chain (142 aa).

This sequence belongs to the ATPase epsilon chain family. F-type ATPases have 2 components, CF(1) - the catalytic core - and CF(0) - the membrane proton channel. CF(1) has five subunits: alpha(3), beta(3), gamma(1), delta(1), epsilon(1). CF(0) has three main subunits: a, b and c.

The protein localises to the cell membrane. In terms of biological role, produces ATP from ADP in the presence of a proton gradient across the membrane. In Lactiplantibacillus plantarum (strain ATCC BAA-793 / NCIMB 8826 / WCFS1) (Lactobacillus plantarum), this protein is ATP synthase epsilon chain.